The sequence spans 483 residues: Keratin, type II cytoskeletal 8 (483 aa).

A compositionally biased stretch (polar residues) spans 1–16 (MSIRVTQKSYKVSTSG). Positions 1–41 (MSIRVTQKSYKVSTSGPRAFSSRSYTSGPGSRISSSSFSRV) are disordered. A head region spans residues 1–90 (MSIRVTQKSY…DPNIQAVRTQ (90 aa)). Ser9 is subject to Phosphoserine; by PKC/PRKCE. Lys11 participates in a covalent cross-link: Glycyl lysine isopeptide (Lys-Gly) (interchain with G-Cter in SUMO2). Residues Ser13, Ser15, Ser21, and Ser22 each carry the phosphoserine modification. Residue Arg23 is modified to Omega-N-methylarginine. Residue Ser24 is modified to Phosphoserine; by PKC/PRKCE. The segment covering 24–41 (SYTSGPGSRISSSSFSRV) has biased composition (low complexity). Thr26 carries the phosphothreonine modification. Residues Ser27 and Ser31 each carry the phosphoserine modification. Arg32 carries the post-translational modification Omega-N-methylarginine. Ser34, Ser37, and Ser39 each carry phosphoserine. Residue Arg40 is modified to Omega-N-methylarginine. Phosphoserine is present on residues Ser43 and Ser44. An Asymmetric dimethylarginine; alternate modification is found at Arg47. Arg47 carries the post-translational modification Omega-N-methylarginine; alternate. Phosphoserine; by MAPK is present on Ser74. Residues 91–126 (EKEQIKTLNNKFASFIDKVRFLEQQNKMLETKWSLL) form a coil 1A region. One can recognise an IF rod domain in the interval 91 to 402 (EKEQIKTLNN…KLLEGEESRL (312 aa)). Lys101 bears the N6-malonyllysine mark. Residues Lys122 and Lys130 each participate in a glycyl lysine isopeptide (Lys-Gly) (interchain with G-Cter in SUMO2) cross-link. The linker 1 stretch occupies residues 127-143 (QQQKTARSNMDNMFESY). A coil 1B region spans residues 144–235 (INNLRRQLET…QLYEEEIREL (92 aa)). Lys197 is covalently cross-linked (Glycyl lysine isopeptide (Lys-Gly) (interchain with G-Cter in SUMO1); alternate). Lys197 participates in a covalent cross-link: Glycyl lysine isopeptide (Lys-Gly) (interchain with G-Cter in SUMO2); alternate. At Lys207 the chain carries N6-acetyllysine. Residue Tyr228 is modified to Phosphotyrosine. The interval 236–259 (QSQISDTSVVLSMDNSRSLDMDSI) is linker 12. Residues Ser253 and Ser258 each carry the phosphoserine modification. A coil 2 region spans residues 260 to 398 (IAEVKAQYED…ATYRKLLEGE (139 aa)). The necessary for interaction with PNN stretch occupies residues 261–382 (AEVKAQYEDI…EYQELMNVKL (122 aa)). A Glycyl lysine isopeptide (Lys-Gly) (interchain with G-Cter in SUMO2) cross-link involves residue Lys264. Ser274 carries the phosphoserine modification. A Glycyl lysine isopeptide (Lys-Gly) (interchain with G-Cter in SUMO2) cross-link involves residue Lys285. Ser291 carries the post-translational modification Phosphoserine. Lys295 participates in a covalent cross-link: Glycyl lysine isopeptide (Lys-Gly) (interchain with G-Cter in SUMO2); alternate. At Lys295 the chain carries N6-acetyllysine; alternate. A Glycyl lysine isopeptide (Lys-Gly) (interchain with G-Cter in SUMO2) cross-link involves residue Lys304. Lys325 is covalently cross-linked (Glycyl lysine isopeptide (Lys-Gly) (interchain with G-Cter in SUMO2); alternate). Lys325 is subject to N6-acetyllysine; alternate. A Phosphoserine modification is found at Ser330. Lys393 participates in a covalent cross-link: Glycyl lysine isopeptide (Lys-Gly) (interchain with G-Cter in SUMO2). The interval 399-483 (ESRLESGMQN…VSESSDVLPK (85 aa)) is tail. Residues Ser400, Ser404, Ser410, Ser417, and Ser424 each carry the phosphoserine modification. Residue Ser432 is modified to Phosphoserine; by CaMK2 and MAPK. Lys472 is covalently cross-linked (Glycyl lysine isopeptide (Lys-Gly) (interchain with G-Cter in SUMO1); alternate). Lys472 is covalently cross-linked (Glycyl lysine isopeptide (Lys-Gly) (interchain with G-Cter in SUMO2); alternate). Phosphoserine occurs at positions 475, 477, and 478.

It belongs to the intermediate filament family. As to quaternary structure, heterotetramer of two type I and two type II keratins. Forms a heterodimer with KRT18. Associates with KRT20. Interacts with PLEC isoform 1C, when in a heterodimer with KRT18. Interacts with PNN. When associated with KRT19, interacts with DMD. Interacts with TCHP. Interacts with APEX1. Interacts with GPER1. Interacts with EPPK1. Interacts with PKP1 and PKP2. (Microbial infection) Interacts with hepatitis C virus/HCV core protein. Phosphorylation on serine residues is enhanced during EGF stimulation and mitosis. Ser-74 phosphorylation plays an important role in keratin filament reorganization. In terms of processing, O-glycosylated. O-GlcNAcylation at multiple sites increases solubility, and decreases stability by inducing proteasomal degradation. Post-translationally, O-glycosylated (O-GlcNAcylated), in a cell cycle-dependent manner. As to expression, observed in muscle fibers accumulating in the costameres of myoplasm at the sarcolemma membrane in structures that contain dystrophin and spectrin. Expressed in gingival mucosa and hard palate of the oral cavity.

Its subcellular location is the cytoplasm. The protein localises to the nucleus. The protein resides in the nucleoplasm. It localises to the nucleus matrix. Together with KRT19, helps to link the contractile apparatus to dystrophin at the costameres of striated muscle. In Homo sapiens (Human), this protein is Keratin, type II cytoskeletal 8 (KRT8).